A 66-amino-acid polypeptide reads, in one-letter code: Alpha-conotoxin-like Tx2 (66 aa).

Positions Met1–Ser21 are cleaved as a signal peptide. Residues Phe22 to Pro49 constitute a propeptide that is removed on maturation. 2 disulfide bridges follow: Cys51-Cys57 and Cys52-Cys65. The ser-Xaa-Pro motif, crucial for potent interaction with nAChR stretch occupies residues Ser53 to Pro55.

This sequence belongs to the conotoxin A superfamily. In terms of tissue distribution, expressed by the venom duct.

It is found in the secreted. Its function is as follows. Alpha-conotoxins act on postsynaptic membranes, they bind to the nicotinic acetylcholine receptors (nAChR) and thus inhibit them. The sequence is that of Alpha-conotoxin-like Tx2 from Conus textile (Cloth-of-gold cone).